Reading from the N-terminus, the 334-residue chain is N-acetyl-gamma-glutamyl-phosphate reductase (334 aa).

Cys154 is a catalytic residue.

Belongs to the NAGSA dehydrogenase family. Type 1 subfamily.

It localises to the cytoplasm. It catalyses the reaction N-acetyl-L-glutamate 5-semialdehyde + phosphate + NADP(+) = N-acetyl-L-glutamyl 5-phosphate + NADPH + H(+). It participates in amino-acid biosynthesis; L-arginine biosynthesis; N(2)-acetyl-L-ornithine from L-glutamate: step 3/4. Catalyzes the NADPH-dependent reduction of N-acetyl-5-glutamyl phosphate to yield N-acetyl-L-glutamate 5-semialdehyde. This chain is N-acetyl-gamma-glutamyl-phosphate reductase, found in Salmonella typhimurium (strain LT2 / SGSC1412 / ATCC 700720).